The sequence spans 286 residues: Bark agglutinin I polypeptide B (286 aa).

A signal peptide spans 1-31 (MASYKFKTQNSFLLLLSISFFFLLLLNKVNS). N148 carries an N-linked (GlcNAc...) asparagine glycan. Mn(2+)-binding residues include E157 and D159. Ca(2+)-binding residues include D159, N163, and D167. D167 and H172 together coordinate Mn(2+).

It belongs to the leguminous lectin family. In terms of assembly, RPbAI is composed of two polypeptides, A and B, that associate into five different tetrameric isolectins. The A4 combination is the only one devoid of agglutination activity. Isoform B4 displays maximal agglutination activity. As to expression, mostly in the axial and ray parenchymal cells of the inner bark. Fewer in the axial and ray parenchymal cells of the xylem. Strong expression in bark. The lectin accumulates in the inner bark in autumn and winter and disappears in may.

Functionally, bark lectins are storage proteins that probably maintain stocks of nitrogen during dormant period. Self-aggregatable molecules that can bind their own carbohydrate side chains. They could also play a role in the plant's defense against phytophagous invertebrates or herbivorous higher animals. The sequence is that of Bark agglutinin I polypeptide B from Robinia pseudoacacia (Black locust).